Consider the following 722-residue polypeptide: MAEAPGAALSRAGWYLSDEGIEACTSSPDKVNVNDIILIALNLEGPCVLQIQKIRNVAAPKDNEESQAAPRMLRLQMTDGHISCTAVEFSYLSKISLNTPPGTKVKLSGAVDIKNGFLLLNDSNTTVLGGEVEHLIEKWELQRSLSKHNRSNIGTEGGPPPFVPFGQKCVSHIQVDSRELDRRKTLQVTMPVKPPNDNDEFEKQRTAAIAEVAKSKETKTFGGGGGGARSNLNMHAAGNRNREILQKEKANKSEGKHEGVYRELVDEKALRHITEMGFSKEASRQALMDNGNNLEAALNVLLNSNKQKPVTGPPLRGKGKGRGRIRSEDEEELGNARPSAPSTLFDFLESKMGTLSVEEPKSQPQQLHQGQNRVSNTEQNGVKDNNQPRYLPRNDTRQPRNEKPPRFQRDTQNSKAVLEGSGLPRNRGSERPSTSSGSEGWAEERTKCDRSYSRYDRTKDTSYLLSSQHSDTVFKKRDNSMQSRSGKGPSYTEAKENPFPQESVDYNNHKRGKRENQTANSDHFYDRKPRTINNEAFSGVKIEKHFNVNTDYQHPVRMNSFIGVPNGETEMPLKGRRVGPIKPAGPIMASSCDDKIFYSSGPKRRSGPIKPEKVLESSIPMEYAKLWKSGDECLALYWEDNKFYRAEVEALHSSGMTAVVKFIDYGNYEEVLLSNIRPIQSEAWEEEGTYDQTLEFRRGGDGQPRRSTRPTQQFYQPPRARN.

Positions 264 to 304 (LVDEKALRHITEMGFSKEASRQALMDNGNNLEAALNVLLNS) constitute a UBA domain. 3 disordered regions span residues 305 to 342 (NKQKPVTGPPLRGKGKGRGRIRSEDEEELGNARPSAPS), 355 to 453 (LSVE…RSYS), and 470 to 526 (SDTV…HFYD). The residue at position 327 (Ser327) is a Phosphoserine. The segment covering 362–388 (SQPQQLHQGQNRVSNTEQNGVKDNNQP) has biased composition (polar residues). Composition is skewed to basic and acidic residues over residues 392 to 409 (PRNDTRQPRNEKPPRFQR) and 442 to 453 (AEERTKCDRSYS). Lys541 is covalently cross-linked (Glycyl lysine isopeptide (Lys-Gly) (interchain with G-Cter in SUMO2)). One can recognise a Tudor domain in the interval 626–686 (LWKSGDECLA…RPIQSEAWEE (61 aa)). A compositionally biased stretch (basic and acidic residues) spans 695–704 (EFRRGGDGQP). The disordered stretch occupies residues 695–722 (EFRRGGDGQPRRSTRPTQQFYQPPRARN). The tract at residues 702–722 (GQPRRSTRPTQQFYQPPRARN) is EBM motif; may mediate interaction with the EJC.

Component of mRNA stress granules. Interacts with FMR1, FXR1, FXR2, EWSR1, FUS, SERBP1, EEF1A1 and DDX3X or DDX3Y, and with the small nuclear ribonucleoprotein-associated proteins SNRPB and SNRPN. Interacts with 'Lys-48'-linked tetra-ubiquitin, but not with monoubiquitin or 'Lys-63'-linked ubiquitin chains. May interact with the exon junction complex (EJC) composed at least of CASC3, EIF4A3, MAGOH and RBM8A. Interacts with POLR2A (via the C-terminal domain (CTD)).

Its subcellular location is the cytoplasm. It localises to the nucleus. In terms of biological role, scaffolding protein that specifically recognizes and binds dimethylarginine-containing proteins. Plays a role in the regulation of translation of target mRNAs by binding Arg/Gly-rich motifs (GAR) in dimethylarginine-containing proteins. In nucleus, acts as a coactivator: recognizes and binds asymmetric dimethylation on the core histone tails associated with transcriptional activation (H3R17me2a and H4R3me2a) and recruits proteins at these arginine-methylated loci. In cytoplasm, acts as an antiviral factor that participates in the assembly of stress granules together with G3BP1. In Bos taurus (Bovine), this protein is Tudor domain-containing protein 3 (TDRD3).